Consider the following 883-residue polypeptide: Putative pentatricopeptide repeat-containing protein At1g13800 (883 aa).

PPR repeat units lie at residues 145–180, 181–215, 216–251, 253–285, 290–324, 325–359, 360–394, 395–429, 430–464, 465–499, 500–534, 537–561, 563–598, 599–633, 634–668, 697–731, 760–794, 795–829, and 830–864; these read LIRV…GRAP, DIKA…GLDA, DAHT…TRNP, VFYL…NILV, LGIA…GIDP, DVYV…RKRI, NCVI…NISL, DRVC…GIAP, DVIN…GKTP, DIVI…GVKP, TYVT…SREN, SMVK…LEFP, PKSV…GVEP, EKSM…KIVP, DLFT…DVKP, DVVY…EIVP, DVFY…GVDP, DAAP…GVKP, and DVVP…GIKP.

This sequence belongs to the PPR family. P subfamily.

In Arabidopsis thaliana (Mouse-ear cress), this protein is Putative pentatricopeptide repeat-containing protein At1g13800.